Consider the following 404-residue polypeptide: UPF0261 protein CTC_01794 (404 aa).

Belongs to the UPF0261 family.

This Clostridium tetani (strain Massachusetts / E88) protein is UPF0261 protein CTC_01794.